Reading from the N-terminus, the 426-residue chain is Coiled-coil domain-containing protein 86 (426 aa).

Residues 1–426 (MDTPLRRSRR…QPPQRPVAKV (426 aa)) form a disordered region. S18 bears the Phosphoserine mark. A compositionally biased stretch (basic and acidic residues) spans 33–49 (ALVDFKSNSEETGELKS). Pro residues predominate over residues 55 to 145 (LSLPSPGPQP…SLPSPGPQPE (91 aa)). S59 is modified (phosphoserine). T66 carries the phosphothreonine modification. S67, S70, S161, S172, S183, S191, S194, S225, S252, S253, and S283 each carry phosphoserine. Over residues 241–255 (QPAQELTVQAPSSPE) the composition is skewed to polar residues. The segment covering 304-320 (GKPKSGRVWKDRSKKRF) has biased composition (basic residues). Basic and acidic residues predominate over residues 339–383 (ERQERKLAKDFARHLEEEKQRRRQEKKERRAENLRRRLENERKAE). Residues 346–389 (AKDFARHLEEEKQRRRQEKKERRAENLRRRLENERKAEIVQVIR) are a coiled coil. The span at 392–402 (AKLKKAKKKQL) shows a compositional bias: basic residues. R408 is modified (citrulline).

Post-translationally, citrullinated by PADI4. As to expression, highly expressed in testis. Also expressed in heart, liver, kidney.

The protein localises to the nucleus. Its subcellular location is the chromosome. It is found in the nucleolus. Required for proper chromosome segregation during mitosis and error-free mitotic progression. This is Coiled-coil domain-containing protein 86 from Mus musculus (Mouse).